The primary structure comprises 157 residues: 2-C-methyl-D-erythritol 2,4-cyclodiphosphate synthase (157 aa).

A divalent metal cation is bound by residues Asp-8 and His-10. 4-CDP-2-C-methyl-D-erythritol 2-phosphate-binding positions include 8-10 (DVH) and 34-35 (HS). His-42 serves as a coordination point for a divalent metal cation. Residues 56–58 (DIG), 132–135 (TTNE), and Arg-142 contribute to the 4-CDP-2-C-methyl-D-erythritol 2-phosphate site.

The protein belongs to the IspF family. In terms of assembly, homotrimer. A divalent metal cation serves as cofactor.

It catalyses the reaction 4-CDP-2-C-methyl-D-erythritol 2-phosphate = 2-C-methyl-D-erythritol 2,4-cyclic diphosphate + CMP. Its pathway is isoprenoid biosynthesis; isopentenyl diphosphate biosynthesis via DXP pathway; isopentenyl diphosphate from 1-deoxy-D-xylulose 5-phosphate: step 4/6. Involved in the biosynthesis of isopentenyl diphosphate (IPP) and dimethylallyl diphosphate (DMAPP), two major building blocks of isoprenoid compounds. Catalyzes the conversion of 4-diphosphocytidyl-2-C-methyl-D-erythritol 2-phosphate (CDP-ME2P) to 2-C-methyl-D-erythritol 2,4-cyclodiphosphate (ME-CPP) with a corresponding release of cytidine 5-monophosphate (CMP). The polypeptide is 2-C-methyl-D-erythritol 2,4-cyclodiphosphate synthase (Prosthecochloris aestuarii (strain DSM 271 / SK 413)).